A 388-amino-acid chain; its full sequence is MQIHPLITDSKTLAQFCARIAKSPYIAVDTEFMRENSYWPDLCLVQVADEHEAAAIDPKAPGLDLSPLLDLMVDNEDVLKVFHAGGQDLEIIYNLTGKTPHPLFDTQIAAMALGLGEQIGYGNLVDAWLGVQLDKGARFTDWARRPLDKRQIDYAIGDVTYLIQIFPKMLEELRRTGRGDWLDQEMERISDPSNYENKPEEAWQRVRIASRKADVLGRLKALAAWREMEAQDKNLPRGRIVKDETLADIASHPPRTQEDLGKVRGLSATWKTNDIGNRLMLALASHAPLAKEEMPERDPKRPGLGKDGALVADLLKLLLKIRSRDINVAARLIARSDDIDALAAGVREDLAILEGWRYEQFGRDAVDLVEGRLAFAVKNGRLKMTRTQ.

In terms of domain architecture, 3'-5' exonuclease spans 7-173 (ITDSKTLAQF…QIFPKMLEEL (167 aa)). One can recognise an HRDC domain in the interval 212 to 293 (KADVLGRLKA…ASHAPLAKEE (82 aa)).

The protein belongs to the RNase D family. A divalent metal cation is required as a cofactor.

It localises to the cytoplasm. The catalysed reaction is Exonucleolytic cleavage that removes extra residues from the 3'-terminus of tRNA to produce 5'-mononucleotides.. In terms of biological role, exonuclease involved in the 3' processing of various precursor tRNAs. Initiates hydrolysis at the 3'-terminus of an RNA molecule and releases 5'-mononucleotides. The sequence is that of Ribonuclease D from Sphingobium indicum (strain DSM 16413 / CCM 7287 / MTCC 6362 / UT26 / NBRC 101211 / UT26S) (Sphingobium japonicum).